Consider the following 172-residue polypeptide: Cytochrome c oxidase subunit 4 isoform 2, mitochondrial (172 aa).

A mitochondrion-targeting transit peptide spans Met-1–Thr-18. A disordered region spans residues Met-1–Arg-33. The segment covering Leu-16–Arg-33 has biased composition (polar residues). Topologically, residues Gln-19–Asn-101 are mitochondrial matrix. A helical transmembrane segment spans residues Glu-102–Tyr-127. The Mitochondrial intermembrane segment spans residues Val-128–Lys-172.

The protein belongs to the cytochrome c oxidase IV family. Component of the cytochrome c oxidase (complex IV, CIV), a multisubunit enzyme composed of 14 subunits. The complex is composed of a catalytic core of 3 subunits MT-CO1, MT-CO2 and MT-CO3, encoded in the mitochondrial DNA, and 11 supernumerary subunits COX4I, COX5A, COX5B, COX6A, COX6B, COX6C, COX7A, COX7B, COX7C, COX8 and NDUFA4, which are encoded in the nuclear genome. The complex exists as a monomer or a dimer and forms supercomplexes (SCs) in the inner mitochondrial membrane with NADH-ubiquinone oxidoreductase (complex I, CI) and ubiquinol-cytochrome c oxidoreductase (cytochrome b-c1 complex, complex III, CIII), resulting in different assemblies (supercomplex SCI(1)III(2)IV(1) and megacomplex MCI(2)III(2)IV(2)). Highly expressed in lung.

It is found in the mitochondrion inner membrane. The protein operates within energy metabolism; oxidative phosphorylation. Component of the cytochrome c oxidase, the last enzyme in the mitochondrial electron transport chain which drives oxidative phosphorylation. The respiratory chain contains 3 multisubunit complexes succinate dehydrogenase (complex II, CII), ubiquinol-cytochrome c oxidoreductase (cytochrome b-c1 complex, complex III, CIII) and cytochrome c oxidase (complex IV, CIV), that cooperate to transfer electrons derived from NADH and succinate to molecular oxygen, creating an electrochemical gradient over the inner membrane that drives transmembrane transport and the ATP synthase. Cytochrome c oxidase is the component of the respiratory chain that catalyzes the reduction of oxygen to water. Electrons originating from reduced cytochrome c in the intermembrane space (IMS) are transferred via the dinuclear copper A center (CU(A)) of subunit 2 and heme A of subunit 1 to the active site in subunit 1, a binuclear center (BNC) formed by heme A3 and copper B (CU(B)). The BNC reduces molecular oxygen to 2 water molecules using 4 electrons from cytochrome c in the IMS and 4 protons from the mitochondrial matrix. This Rattus norvegicus (Rat) protein is Cytochrome c oxidase subunit 4 isoform 2, mitochondrial (Cox4i2).